The chain runs to 104 residues: Large ribosomal subunit protein bL21 (104 aa).

This sequence belongs to the bacterial ribosomal protein bL21 family. In terms of assembly, part of the 50S ribosomal subunit. Contacts protein L20.

In terms of biological role, this protein binds to 23S rRNA in the presence of protein L20. The chain is Large ribosomal subunit protein bL21 from Tropheryma whipplei (strain TW08/27) (Whipple's bacillus).